The chain runs to 189 residues: Large ribosomal subunit protein uL6 (189 aa).

Belongs to the universal ribosomal protein uL6 family. Part of the 50S ribosomal subunit.

This protein binds to the 23S rRNA, and is important in its secondary structure. It is located near the subunit interface in the base of the L7/L12 stalk, and near the tRNA binding site of the peptidyltransferase center. The polypeptide is Large ribosomal subunit protein uL6 (Phocaeicola vulgatus (strain ATCC 8482 / DSM 1447 / JCM 5826 / CCUG 4940 / NBRC 14291 / NCTC 11154) (Bacteroides vulgatus)).